A 546-amino-acid polypeptide reads, in one-letter code: Chaperonin GroEL (546 aa).

Residues Thr30–Pro33, Lys51, Asp87–Thr91, Gly415, Asn479–Ala481, and Asp495 each bind ATP. Positions Asp527–Met546 are disordered. A compositionally biased stretch (gly residues) spans Gly536–Met546.

Belongs to the chaperonin (HSP60) family. In terms of assembly, forms a cylinder of 14 subunits composed of two heptameric rings stacked back-to-back. Interacts with the co-chaperonin GroES.

Its subcellular location is the cytoplasm. It catalyses the reaction ATP + H2O + a folded polypeptide = ADP + phosphate + an unfolded polypeptide.. Functionally, together with its co-chaperonin GroES, plays an essential role in assisting protein folding. The GroEL-GroES system forms a nano-cage that allows encapsulation of the non-native substrate proteins and provides a physical environment optimized to promote and accelerate protein folding. The protein is Chaperonin GroEL of Acidovorax ebreus (strain TPSY) (Diaphorobacter sp. (strain TPSY)).